The sequence spans 298 residues: MGSATPPRLQKFPATAPADDIYAAFKQDGCVIIEGFVPPDQMARFSQEIQPAMEKIQVQVTNDGNSNDRVKRFSKLVTTSPTFRHEILENDLMHELLQRVFSKPGEGLGYHFNDTMVIEVQPGAPAQRLHRDQELYPWWNSMGPNAPECLVNFFCAVTPFTAENGATRLVPGSNRWPELTLINAAECPQYGNIESAPAIMQPGDCYMMSGKVIHGAGHNATLSDQRRALAFSTIRRELRPVQAFPLWIPMKIARELSPRTQAMFGFRSSTQHCDVDTVHFWGNDGKDIGEHLGLMSSA.

Substrate is bound by residues R72 and Q127. Positions 130 and 132 each coordinate Fe cation. Residue T167 participates in substrate binding. Fe cation is bound at residue H214. R226 contacts substrate.

Belongs to the PhyH family. As to quaternary structure, homodimer. Fe cation is required as a cofactor.

It carries out the reaction preaustinoid A1 + 2-oxoglutarate + O2 = preaustinoid A2 + succinate + CO2 + H2O. It catalyses the reaction preaustinoid A2 + 2-oxoglutarate + O2 = preaustinoid A3 + succinate + CO2 + H2O. The catalysed reaction is berkeleyone A + 2-oxoglutarate + O2 = preaustinoid A + succinate + CO2 + H2O. It participates in secondary metabolite biosynthesis; terpenoid biosynthesis. In terms of biological role, multifunctional dioxygenase; part of the gene cluster that mediates the biosynthesis of calidodehydroaustin, a fungal meroterpenoid. The first step of the pathway is the synthesis of 3,5-dimethylorsellinic acid by the polyketide synthase ausA. 3,5-dimethylorsellinic acid is then prenylated by the polyprenyl transferase ausN. Further epoxidation by the FAD-dependent monooxygenase ausM and cyclization by the probable terpene cyclase ausL lead to the formation of protoaustinoid A. Protoaustinoid A is then oxidized to spiro-lactone preaustinoid A3 by the combined action of the FAD-binding monooxygenases ausB and ausC, and the dioxygenase ausE. Acid-catalyzed keto-rearrangement and ring contraction of the tetraketide portion of preaustinoid A3 by ausJ lead to the formation of preaustinoid A4. The aldo-keto reductase ausK, with the help of ausH, is involved in the next step by transforming preaustinoid A4 into isoaustinone which is in turn hydroxylated by the P450 monooxygenase ausI to form austinolide. The cytochrome P450 monooxygenase ausG modifies austinolide to austinol. Austinol is further acetylated to austin by the O-acetyltransferase ausP, which spontaneously changes to dehydroaustin. The cytochrome P450 monooxygenase ausR then converts dehydroaustin is into 7-dehydrodehydroaustin. The hydroxylation catalyzed by ausR permits the O-acetyltransferase ausQ to add an additional acetyl group to the molecule, leading to the formation of acetoxydehydroaustin. The short chain dehydrogenase ausT catalyzes the reduction of the double bond present between carbon atoms 1 and 2 to convert 7-dehydrodehydroaustin into 1,2-dihydro-7-hydroxydehydroaustin. AusQ catalyzes not only an acetylation reaction but also the addition of the PKS ausV diketide product to 1,2-dihydro-7-hydroxydehydroaustin, forming precalidodehydroaustin. Finally, the iron/alpha-ketoglutarate-dependent dioxygenase converts precalidodehydroaustin into calidodehydroaustin. This chain is Multifunctional dioxygenase ausE, found in Aspergillus calidoustus.